The chain runs to 485 residues: Glutamyl-tRNA(Gln) amidotransferase subunit A (485 aa).

Catalysis depends on charge relay system residues Lys78 and Ser153. The active-site Acyl-ester intermediate is the Ser177.

This sequence belongs to the amidase family. GatA subfamily. As to quaternary structure, heterotrimer of A, B and C subunits.

The catalysed reaction is L-glutamyl-tRNA(Gln) + L-glutamine + ATP + H2O = L-glutaminyl-tRNA(Gln) + L-glutamate + ADP + phosphate + H(+). Functionally, allows the formation of correctly charged Gln-tRNA(Gln) through the transamidation of misacylated Glu-tRNA(Gln) in organisms which lack glutaminyl-tRNA synthetase. The reaction takes place in the presence of glutamine and ATP through an activated gamma-phospho-Glu-tRNA(Gln). This is Glutamyl-tRNA(Gln) amidotransferase subunit A from Syntrophus aciditrophicus (strain SB).